Here is a 205-residue protein sequence, read N- to C-terminus: Holliday junction branch migration complex subunit RuvA (205 aa).

The domain I stretch occupies residues 1–64 (MIGRLRGIVL…EDAQLLYGFN (64 aa)). The tract at residues 65-143 (DKQERALFRE…GLNGDLFNQS (79 aa)) is domain II. The flexible linker stretch occupies residues 144-156 (SDINLPATAKQTT). A domain III region spans residues 157 to 205 (SDADSEAEAAAALVSLGYKPQEASRMVSKIAKPGADCETLIREALRAVL).

The protein belongs to the RuvA family. Homotetramer. Forms an RuvA(8)-RuvB(12)-Holliday junction (HJ) complex. HJ DNA is sandwiched between 2 RuvA tetramers; dsDNA enters through RuvA and exits via RuvB. An RuvB hexamer assembles on each DNA strand where it exits the tetramer. Each RuvB hexamer is contacted by two RuvA subunits (via domain III) on 2 adjacent RuvB subunits; this complex drives branch migration. In the full resolvosome a probable DNA-RuvA(4)-RuvB(12)-RuvC(2) complex forms which resolves the HJ.

It localises to the cytoplasm. Its function is as follows. The RuvA-RuvB-RuvC complex processes Holliday junction (HJ) DNA during genetic recombination and DNA repair, while the RuvA-RuvB complex plays an important role in the rescue of blocked DNA replication forks via replication fork reversal (RFR). RuvA specifically binds to HJ cruciform DNA, conferring on it an open structure. The RuvB hexamer acts as an ATP-dependent pump, pulling dsDNA into and through the RuvAB complex. HJ branch migration allows RuvC to scan DNA until it finds its consensus sequence, where it cleaves and resolves the cruciform DNA. The chain is Holliday junction branch migration complex subunit RuvA from Photorhabdus laumondii subsp. laumondii (strain DSM 15139 / CIP 105565 / TT01) (Photorhabdus luminescens subsp. laumondii).